A 792-amino-acid chain; its full sequence is Oxidoreductase cns1 (792 aa).

Interacts with cns2.

It is found in the lipid droplet. It functions in the pathway secondary metabolite biosynthesis. Functionally, oxidoreductase; part of the gene cluster that mediates the biosynthesis of cordycepin (COR) and pentostatin (PTN), two adenosine analogs with related bioactivity profiles as both mimic adenosine and can inhibit some of the processes that are adenosine dependent. Within the pathway, cns1 catalyzes the last step by converting the cns2 product 2'-carbonyl-3'-deoxyadenosine (2'-C-3'-dA) into cordycepin (3'-deoxyadenosine). The first step of cordycepin biosynthesis involves hydroxyl phosphorylation of the 3'-OH position on adenosine to produce adenosine-3'-monophosphate (3'-AMP), catalyzed by kinase activity of cns3. Next, 3'-AMP is dephosphorylated to 2'-carbonyl-3'-deoxyadenosine by cns2, which is finally converted to cordycepin by the oxidoreductase cns1. Pentostatin production is mediated by the ATP phosphoribosyltransferase activity of cns3 on adenosine to inhibit the activity of adenosine deaminase (ADA) to prevent COR deamination to 3'-deoxyinosine (3'-dI). The chain is Oxidoreductase cns1 from Cordyceps militaris (strain CM01) (Caterpillar fungus).